We begin with the raw amino-acid sequence, 700 residues long: Polyribonucleotide nucleotidyltransferase (700 aa).

Mg(2+) contacts are provided by aspartate 485 and aspartate 491. The region spanning 552–611 is the KH domain; it reads PRITVIKINPEKIRDVIGKGGAVIRALTEETGTTIELEDDGTVKIASSNGEATKEAIRRI. Residues 621–689 form the S1 motif domain; sequence GRIYNGKVIR…RQGRVRLSIK (69 aa).

Belongs to the polyribonucleotide nucleotidyltransferase family. Component of the RNA degradosome, which is a multiprotein complex involved in RNA processing and mRNA degradation. The cofactor is Mg(2+).

The protein resides in the cytoplasm. It catalyses the reaction RNA(n+1) + phosphate = RNA(n) + a ribonucleoside 5'-diphosphate. In terms of biological role, involved in mRNA degradation. Catalyzes the phosphorolysis of single-stranded polyribonucleotides processively in the 3'- to 5'-direction. This Shewanella baltica (strain OS185) protein is Polyribonucleotide nucleotidyltransferase.